A 208-amino-acid chain; its full sequence is Protein GrpE (208 aa).

Residues 1 to 12 (MTNKDESVEKNT) show a composition bias toward basic and acidic residues. The segment at 1–59 (MTNKDESVEKNTESTVEETNIKQNIDDSVEQAEESKGHLQDEAIEETSDENVIEEIDPK) is disordered. Residues 13-23 (ESTVEETNIKQ) show a composition bias toward polar residues. Acidic residues predominate over residues 42–55 (EAIEETSDENVIEE).

This sequence belongs to the GrpE family. Homodimer.

It is found in the cytoplasm. Participates actively in the response to hyperosmotic and heat shock by preventing the aggregation of stress-denatured proteins, in association with DnaK and GrpE. It is the nucleotide exchange factor for DnaK and may function as a thermosensor. Unfolded proteins bind initially to DnaJ; upon interaction with the DnaJ-bound protein, DnaK hydrolyzes its bound ATP, resulting in the formation of a stable complex. GrpE releases ADP from DnaK; ATP binding to DnaK triggers the release of the substrate protein, thus completing the reaction cycle. Several rounds of ATP-dependent interactions between DnaJ, DnaK and GrpE are required for fully efficient folding. This is Protein GrpE from Staphylococcus aureus (strain Mu3 / ATCC 700698).